A 319-amino-acid polypeptide reads, in one-letter code: UPF0761 membrane protein PBPRA3489 (319 aa).

Helical transmembrane passes span 50 to 70 (LVPMITVVLAALSAFPVFAGL), 107 to 127 (VGIGALFVVAMMLMSSIDHAL), 143 to 163 (FSIYWMVLTLGPILVGSSIAV), 188 to 208 (ALPVIMSSSAFLGLYLLVPNL), 215 to 235 (ALLGALVASSLFELSKKGFAL), and 249 to 269 (ALAVIPILFVWVYLCWCIVLL).

The protein belongs to the UPF0761 family.

The protein localises to the cell inner membrane. The chain is UPF0761 membrane protein PBPRA3489 from Photobacterium profundum (strain SS9).